The sequence spans 508 residues: Potassium/proton antiporter CemA (508 aa).

Helical transmembrane passes span 66–86 (LFIIYWSLLEYRISLCFLNLL), 282–302 (YQALASIQYIGCLIFLPWIIS), 386–406 (ILHLLTGMICFTTLGALFILG), 433–453 (ILLLTDLCIGFHSPHGWEVVI), and 468–488 (IISCFVSTFPVILDTVSKYWI).

Belongs to the CemA family.

It localises to the plastid. Its subcellular location is the chloroplast inner membrane. The enzyme catalyses K(+)(in) + H(+)(out) = K(+)(out) + H(+)(in). Its function is as follows. Contributes to K(+)/H(+) antiport activity by supporting proton efflux to control proton extrusion and homeostasis in chloroplasts in a light-dependent manner to modulate photosynthesis. Prevents excessive induction of non-photochemical quenching (NPQ) under continuous-light conditions. Indirectly promotes efficient inorganic carbon uptake into chloroplasts. This chain is Potassium/proton antiporter CemA, found in Anthoceros angustus (Hornwort).